The chain runs to 227 residues: UPF0173 metal-dependent hydrolase BCAH820_4729 (227 aa).

Belongs to the UPF0173 family.

The protein is UPF0173 metal-dependent hydrolase BCAH820_4729 of Bacillus cereus (strain AH820).